The primary structure comprises 324 residues: MSDKLKSNKKLEGETFMKEGDKLSKTNIFRWKADWDSAALAYEKAANAFRSAKIYDSAKYCFLRLSLCQTHMDVYYLAAKSMENASAMAKELKETQECANLLLESCKLYRTNGNSFQAADTMTKAAKLLEDIDLNQTIKLLTDACELFELDDKDHFSGDTFKQTISMLLKHKKYTEAVDLMILQNRVFVKLEQNHDLHKSCLSVITISLATDDIVASKKYYEQFLDYPSFIHSQEGTTAQELITAFDNHDVDGVKKIVSRHIFNFLDNQVAKIAKNLSISKDSLNPTINSTAPQQQYSNTTTTTTNNTNNNNPTSQQDDDEDVL.

Polar residues predominate over residues 285-298 (NPTINSTAPQQQYS). Residues 285–324 (NPTINSTAPQQQYSNTTTTTTNNTNNNNPTSQQDDDEDVL) form a disordered region. The segment covering 299 to 312 (NTTTTTTNNTNNNN) has biased composition (low complexity).

This sequence belongs to the SNAP family. As to quaternary structure, interacts with nsfA and probably SNARE proteins.

Its subcellular location is the cytoplasmic vesicle membrane. In terms of biological role, may be required for vesicular transport between the endoplasmic reticulum and the Golgi apparatus. Involved in vesicle fusion with nsfA and probably SNARE proteins. The protein is Gamma-soluble NSF attachment protein (snpC) of Dictyostelium discoideum (Social amoeba).